An 82-amino-acid polypeptide reads, in one-letter code: Diphthamide biosynthesis protein 3 (82 aa).

Residues 3 to 59 (TYDEIEIEDMTFEPENQMFTYPCPCGDRFQIYLDDMFEGEKVAVCPSCSLMIDVVFD) form the DPH-type MB domain. Fe cation-binding residues include C25, C27, C47, and C50. The segment at 66–82 (YYEEAGIHPPEPIAAAA) is required for interaction with the elongator complex.

The protein belongs to the DPH3 family. Component of the 2-(3-amino-3-carboxypropyl)histidine synthase complex composed of DPH1, DPH2, KTI11/DPH3 and a NADH-dependent reductase, predominantly CBR1. Interacts with DPH1. Interacts with DPH2. Interacts with CBR1. Interacts with elongation factor 2. Interacts with ATS1/KTI13; the interaction is direct. Interacts with the 40S ribosomal protein RPS7A. Interacts with the 40S ribosomal protein RPS19A. Interacts with the elongator complex subunit IKI3/ELP1. Interacts with the elongator complex subunit ELP2. Interacts with the elongator complex subunit ELP3. Interacts with the elongator complex subunit ELP5.

Its subcellular location is the cytoplasm. The protein resides in the nucleus. It carries out the reaction [3Fe-4S](1+)-[protein] + Fe(2+)-[Dph3] = [3Fe-4S](0)-[protein] + Fe(3+)-[Dph3]. The enzyme catalyses 2 [3Fe-4S](0)-[protein] + 2 Fe(2+)-[Dph3] + NADH = 2 [4Fe-4S](1+)-[protein] + 2 [Dph3] + NAD(+) + H(+). The protein operates within protein modification; peptidyl-diphthamide biosynthesis. Its function is as follows. Required for the first step of diphthamide biosynthesis, a post-translational modification of histidine which occurs in elongation factor 2. DPH1 and DPH2 transfer a 3-amino-3-carboxypropyl (ACP) group from S-adenosyl-L-methionine (SAM) to a histidine residue, the reaction is assisted by a reduction system comprising KTI11/DPH3 and a NADH-dependent reductase, predominantly CBR1. Acts as an electron donor to reduce the Fe-S cluster in DPH1-DPH2 keeping the [4Fe-4S] clusters in the active and reduced state. Restores iron to DPH1-DPH2 iron-sulfur clusters which have degraded from [4Fe-4S] to [3Fe-4S] by donating an iron atom to reform [4Fe-4S] clusters, in a manner dependent on the presence of elongation factor 2 and SAM. Together with ATS1; associates with the elongator complex and is required for tRNA Wobble base modifications mediated by the elongator complex. The elongator complex is required for multiple tRNA modifications, including mcm5U (5-methoxycarbonylmethyl uridine), mcm5s 2U (5-methoxycarbonylmethyl-2-thiouridine), and ncm5U (5-carbamoylmethyl uridine). The chain is Diphthamide biosynthesis protein 3 from Saccharomyces cerevisiae (strain ATCC 204508 / S288c) (Baker's yeast).